Reading from the N-terminus, the 102-residue chain is Secretoglobin family 1D member (102 aa).

Residues M1 to A21 form the signal peptide. N-linked (GlcNAc...) asparagine glycosylation occurs at N87.

This sequence belongs to the secretoglobin family. Lipophilin subfamily.

It is found in the secreted. In terms of biological role, may bind androgens and other steroids. May be under transcriptional regulation of steroid hormones. This chain is Secretoglobin family 1D member (SCGB1D), found in Bos taurus (Bovine).